The chain runs to 201 residues: Small ribosomal subunit protein uS4c (201 aa).

The segment at 15-44 (LGALPGLTNKRPRAGSDLRNQSRSGKKSQY) is disordered. The S4 RNA-binding domain maps to 89–149 (MRLDNILFRL…DEQNSRALIQ (61 aa)).

The protein belongs to the universal ribosomal protein uS4 family. As to quaternary structure, part of the 30S ribosomal subunit. Contacts protein S5. The interaction surface between S4 and S5 is involved in control of translational fidelity.

Its subcellular location is the plastid. The protein resides in the chloroplast. Its function is as follows. One of the primary rRNA binding proteins, it binds directly to 16S rRNA where it nucleates assembly of the body of the 30S subunit. Functionally, with S5 and S12 plays an important role in translational accuracy. This Daucus carota (Wild carrot) protein is Small ribosomal subunit protein uS4c (rps4).